The following is a 532-amino-acid chain: MEELSSVGEQVFAAECILSKRLRKGKLEYLVKWRGWSSKHNSWEPEENILDPRLLLAFQKKEHEKEVQNRKRGKRPRGRPRKLTAMSSCSRRSKLKEPDAPSKSKSSSSSSSSTSSSSSSDEEDDSDLDAKRGPRGRETHPVPQKKAQILVAKPELKDPIRKKRGRKPLPPEQKATRRPVSLAKVLKTARKDLGAPASKLPPPLSAPVAGLAALKAHAKEACGGPSAMATPENLASLMKGMASSPGRGGISWQSSIVHYMNRMTQSQAQAASRLALKAQATNKCGLGLDLKVRTQKGELGMSPPGSKIPKAPSGGAVEQKVGNTGGPPHTHGASRVPAGCPGPQPAPTQELSLQVLDLQSVKNGMPGVGLLARHATATKGVPATNPAPGKGTGSGLIGASGATMPTDTSKSEKLASRAVAPPTPASKRDCVKGSATPSGQESRTAPGEARKAATLPEMSAGEESSSSDSDPDSASPPSTGQNPSVSVQTSQDWKPTRSLIEHVFVTDVTANLITVTVKESPTSVGFFNLRHY.

Residues 1–66 (MEELSSVGEQ…AFQKKEHEKE (66 aa)) are involved in the interaction with H3C15 and H3C1. The region spanning 12-70 (FAAECILSKRLRKGKLEYLVKWRGWSSKHNSWEPEENILDPRLLLAFQKKEHEKEVQNR) is the Chromo domain. A compositionally biased stretch (basic and acidic residues) spans 60-69 (KKEHEKEVQN). The interval 60-204 (KKEHEKEVQN…APASKLPPPL (145 aa)) is disordered. Basic residues predominate over residues 70–82 (RKRGKRPRGRPRK). Residues 75–87 (RPRGRPRKLTAMS) constitute a DNA-binding region (a.T hook). The segment covering 103-119 (KSKSSSSSSSSTSSSSS) has biased composition (low complexity). A compositionally biased stretch (basic and acidic residues) spans 128–140 (LDAKRGPRGRETH). Residues lysine 146 and lysine 153 each participate in a glycyl lysine isopeptide (Lys-Gly) (interchain with G-Cter in SUMO2) cross-link. A Nuclear localization signal motif is present at residues 163–168 (KRGRKP). At arginine 247 the chain carries Asymmetric dimethylarginine; alternate. At arginine 247 the chain carries Omega-N-methylarginine; alternate. Disordered regions lie at residues 296–348 (KGEL…PAPT) and 379–493 (KGVP…SQDW). Serine 302 carries the phosphoserine modification. Residues 464–478 (SSSSDSDPDSASPPS) show a composition bias toward low complexity. A compositionally biased stretch (polar residues) spans 479-493 (TGQNPSVSVQTSQDW).

As to quaternary structure, component of a PRC1-like complex. The composition of the PRC1 complex may differ between the PRC1 complex in pluripotent embryonic stem cells containing RNF2, CBX7 and PCGF2, and the PRC1 complex in differentiating cells containing RNF2, CBX2, CBX4 and BMI1. May interact with H3C15, H3C1 and RNF2. Interacts (via chromodomain) with histone H3K9Me3 and H3K27me3.

It is found in the nucleus. Its subcellular location is the chromosome. Its function is as follows. Component of a Polycomb group (PcG) multiprotein PRC1-like complex, a complex class required to maintain the transcriptionally repressive state of many genes, including Hox genes, throughout development. PcG PRC1 complex acts via chromatin remodeling and modification of histones; it mediates monoubiquitination of histone H2A 'Lys-119', rendering chromatin heritably changed in its expressibility. Binds to histone H3 trimethylated at 'Lys-9' (H3K9me3) or at 'Lys-27' (H3K27me3). Plays a role in the lineage differentiation of the germ layers in embryonic development. Involved in sexual development, acting as activator of NR5A1 expression. This chain is Chromobox protein homolog 2 (CBX2), found in Homo sapiens (Human).